Reading from the N-terminus, the 529-residue chain is GTPase Obg (529 aa).

An Obg domain is found at 2 to 159; it reads PTFVDRVVLH…LDAVLELKTV (158 aa). A disordered region spans residues 62 to 86; that stretch reads FHPHQRASRGRPGQGSNRHGADGAD. Positions 160-332 constitute an OBG-type G domain; sequence ADVALVGFPS…LSLALADLVA (173 aa). GTP contacts are provided by residues 166–173, 191–195, 213–216, 284–287, and 313–315; these read GFPSAGKS, FTTLV, DVPG, NKID, and STA. Mg(2+)-binding residues include serine 173 and threonine 193. The OCT domain occupies 350–427; that stretch reads PRAVNEPDFT…IGEVTFDWEP (78 aa). Disordered regions lie at residues 434 to 494 and 506 to 529; these read LGNG…DRLR and ARRA…EEEG. 2 stretches are compositionally biased toward low complexity: residues 461-472 and 508-520; these read AGTAASGAAPSP and RAAA…VRGE.

This sequence belongs to the TRAFAC class OBG-HflX-like GTPase superfamily. OBG GTPase family. In terms of assembly, monomer. It depends on Mg(2+) as a cofactor.

The protein resides in the cytoplasm. In terms of biological role, an essential GTPase which binds GTP, GDP and possibly (p)ppGpp with moderate affinity, with high nucleotide exchange rates and a fairly low GTP hydrolysis rate. Plays a role in control of the cell cycle, stress response, ribosome biogenesis and in those bacteria that undergo differentiation, in morphogenesis control. The sequence is that of GTPase Obg from Frankia casuarinae (strain DSM 45818 / CECT 9043 / HFP020203 / CcI3).